A 557-amino-acid polypeptide reads, in one-letter code: Formate--tetrahydrofolate ligase (557 aa).

66 to 73 (TPAGEGKS) serves as a coordination point for ATP.

It belongs to the formate--tetrahydrofolate ligase family.

It catalyses the reaction (6S)-5,6,7,8-tetrahydrofolate + formate + ATP = (6R)-10-formyltetrahydrofolate + ADP + phosphate. It functions in the pathway one-carbon metabolism; tetrahydrofolate interconversion. The protein is Formate--tetrahydrofolate ligase of Clostridium botulinum (strain Okra / Type B1).